Consider the following 380-residue polypeptide: Putative ankyrin repeat protein RF_1306 (380 aa).

ANK repeat units lie at residues 48–76, 80–109, 112–143, 170–199, 203–233, 239–268, 270–299, 303–333, and 337–366; these read NKWSDLHIAVGAKELKLVKALCNEKNINA, KCRTPLELAILGNDLETVKFLVQMGGKIAP, YGWSAIHLAIKIDNVEMVEYLYENTEFQKYDK, NNKTPLELAVESKNISSVKALIIKGAKFDI, LGYKIFELAIDSEDMKLIEYLVNHTLVGKNT, LEKVAQIYDKNINLSKLVKVLIKDNAGFDK, LGQKLLQKAIYADDLELVETLYSKGVDAQY, LGRSGLHHAIKANCGEELIQFLIEHTTDINY, and SGLNPLGLAKSNNCTVATKLLLEAGAYESY.

This Rickettsia felis (strain ATCC VR-1525 / URRWXCal2) (Rickettsia azadi) protein is Putative ankyrin repeat protein RF_1306.